The chain runs to 119 residues: ATP-dependent Clp protease adapter protein ClpS (119 aa).

The protein belongs to the ClpS family. As to quaternary structure, binds to the N-terminal domain of the chaperone ClpA.

In terms of biological role, involved in the modulation of the specificity of the ClpAP-mediated ATP-dependent protein degradation. In Marinobacter nauticus (strain ATCC 700491 / DSM 11845 / VT8) (Marinobacter aquaeolei), this protein is ATP-dependent Clp protease adapter protein ClpS.